The sequence spans 355 residues: UDP-N-acetylglucosamine--N-acetylmuramyl-(pentapeptide) pyrophosphoryl-undecaprenol N-acetylglucosamine transferase (355 aa).

UDP-N-acetyl-alpha-D-glucosamine is bound by residues Thr-14–Gly-16, Asn-126, Arg-162, Ser-190, Ile-244, and Gln-289.

It belongs to the glycosyltransferase 28 family. MurG subfamily.

It localises to the cell inner membrane. It carries out the reaction di-trans,octa-cis-undecaprenyl diphospho-N-acetyl-alpha-D-muramoyl-L-alanyl-D-glutamyl-meso-2,6-diaminopimeloyl-D-alanyl-D-alanine + UDP-N-acetyl-alpha-D-glucosamine = di-trans,octa-cis-undecaprenyl diphospho-[N-acetyl-alpha-D-glucosaminyl-(1-&gt;4)]-N-acetyl-alpha-D-muramoyl-L-alanyl-D-glutamyl-meso-2,6-diaminopimeloyl-D-alanyl-D-alanine + UDP + H(+). Its pathway is cell wall biogenesis; peptidoglycan biosynthesis. Cell wall formation. Catalyzes the transfer of a GlcNAc subunit on undecaprenyl-pyrophosphoryl-MurNAc-pentapeptide (lipid intermediate I) to form undecaprenyl-pyrophosphoryl-MurNAc-(pentapeptide)GlcNAc (lipid intermediate II). The sequence is that of UDP-N-acetylglucosamine--N-acetylmuramyl-(pentapeptide) pyrophosphoryl-undecaprenol N-acetylglucosamine transferase from Paracidovorax citrulli (strain AAC00-1) (Acidovorax citrulli).